Consider the following 956-residue polypeptide: Transient receptor potential channel pyrexia (956 aa).

Residues 1 to 491 (MENVRFSIIE…LFLKWRRIRK (491 aa)) are Cytoplasmic-facing. ANK repeat units follow at residues 132 to 161 (RGRT…DPNR), 166 to 195 (KEVT…SINI), 198 to 227 (EKRS…DPNT), 231 to 260 (YTET…DVRS), 265 to 294 (GKVT…EVDC), 298 to 327 (SHQT…NVNA), 331 to 362 (DGRT…DVNK), and 366 to 395 (YGYT…DITA). A helical membrane pass occupies residues 492-512 (FFLMSLAYHTLFVILFTFYVI). At 513-525 (WVYVRCCKKEELC) the chain is on the extracellular side. Residues 526-546 (VAPGYVSTIGYLVIILNLILL) traverse the membrane as a helical segment. Residues 547–565 (GKEVFQMAHGLRGYAKYWE) lie on the Cytoplasmic side of the membrane. Residues 566–584 (NWLQWTIGTGVLLCVTPET) form a helical membrane-spanning segment. At 585–601 (VRTDDLTAVPVWQHHVA) the chain is on the extracellular side. Residues 602-622 (AIVILLVWLELMMLVGRFPIF) form a helical membrane-spanning segment. Over 623–638 (GVYVQMFTKVAVNFAK) the chain is Cytoplasmic. A helical membrane pass occupies residues 639-659 (FLLAYICLLVAFGLSFAVLFN). Residues 660 to 701 (DYPAFENITWSFLKSITMMSGELEFEDIFYGDYAVKFPVTAH) lie on the Extracellular side of the membrane. A glycan (N-linked (GlcNAc...) asparagine) is linked at Asn666. The helical transmembrane segment at 702-722 (IIFLSFVLLVTVILTNLMVGL) threads the bilayer. Over 723–956 (AVSDIQGLQV…VASSHIRRHR (234 aa)) the chain is Cytoplasmic.

This sequence belongs to the transient receptor (TC 1.A.4) family. STrpC subfamily. Homooligomer; between isoform A and isoform B. In terms of tissue distribution, expressed in various peripheral nerves and the central nerves in embryos. In adults, it is expressed in sensory neurons lying beneath the bristles around eyes, neurons innervating the bristles on the back of thorax and neurons in maxillary palps, proboscis and antennae. Expressed in multidendritic neurons, which mediate temperature sensing, as well as non-multidendritic neurons in larval epidermis. Localizes ubiquitously throughout neurites.

The protein localises to the membrane. Receptor-activated non-selective cation channel involved in protection or tolerance from high temperature stress. Activated by temperatures above 40 degrees Celsius. More permeable to K(+) than to Na(+). May act in stress protection allow flies to survive in natural environments. The polypeptide is Transient receptor potential channel pyrexia (pyx) (Drosophila melanogaster (Fruit fly)).